The primary structure comprises 155 residues: MATRNPPPQEYESDDDSYEVLDLTEYARRHHWWNRVFGHSSGPMVEKYSVATQIVMGGVSGWCAGFLFQKVGKLAATAVGGGFLLLQIASHSGYVQIDWKRVEKDVNKAKRQIKKRANKAAPEINNIIEEATEFVKQNIVISSGFVGGFLLGLAS.

The Cytoplasmic segment spans residues 1–47 (MATRNPPPQEYESDDDSYEVLDLTEYARRHHWWNRVFGHSSGPMVEK). Phosphoserine occurs at positions 13 and 17. Position 18 is a phosphotyrosine; by SRC (tyrosine 18). Residues 18 to 21 (YEVL) carry the YXXL motif. The chain crosses the membrane as a helical span at residues 48 to 68 (YSVATQIVMGGVSGWCAGFLF). Residues 69–74 (QKVGKL) lie on the Mitochondrial intermembrane side of the membrane. A helical membrane pass occupies residues 75 to 95 (AATAVGGGFLLLQIASHSGYV). Residues 96 to 133 (QIDWKRVEKDVNKAKRQIKKRANKAAPEINNIIEEATE) lie on the Cytoplasmic side of the membrane. Lysine 119 is covalently cross-linked (Glycyl lysine isopeptide (Lys-Gly) (interchain with G-Cter in ubiquitin)). Residues 134 to 154 (FVKQNIVISSGFVGGFLLGLA) form a helical membrane-spanning segment. Serine 155 is a topological domain (mitochondrial intermembrane).

Belongs to the FUN14 family. Interacts (via YXXL motif) with MAP1 LC3 family proteins MAP1LC3A, MAP1LC3B and GABARAP. Interacts with DNM1L/DPR1. Interacts with GPX4. In terms of processing, phosphorylation at Ser-13 by CK2 and at Tyr-18 by SRC inhibits activation of mitophagy. Following hypoxia, dephosphorylated at Tyr-18, leading to interaction with MAP1 LC3 family proteins and triggering mitophagy. Dephosphorylation is mediated by PGAM5. Phosphorylated by ULK1 at Ser-17 which enhances FUNDC1 binding to LC3. Post-translationally, ubiquitinated on Lys-119. Deubiquitinated by USP19; leading to hypoxia-induced DRP1 oligomerization and GTPase activity.

It localises to the mitochondrion outer membrane. Functionally, integral mitochondrial outer-membrane protein that mediates the formation of mitochondria-associated endoplasmic reticulum membranes (MAMs). In turn, mediates angiogenesis and neoangiogenesis through interference with intracellular Ca(2+) communication and regulation of the vascular endothelial growth factor receptor KDR/VEGFR2 expression at both mRNA and protein levels. Also acts as an activator of hypoxia-induced mitophagy, an important mechanism for mitochondrial quality and homeostasis, by interacting with and recruiting LC3 protein family to mitochondria. Mechanistically, recruits DRP1 at ER-mitochondria contact sites leading to DRP1 oligomerization and GTPase activity to facilitate mitochondrial fission during hypoxia. Additionally, plays a role in hepatic ferroptosis by interacting directly with glutathione peroxidase/GPX4 to facilitate its recruitment into mitochondria through TOM/TIM complex where it is degraded by mitophagy. The polypeptide is FUN14 domain-containing protein 1 (FUNDC1) (Bos taurus (Bovine)).